A 137-amino-acid polypeptide reads, in one-letter code: TM2 domain-containing protein DDB_G0287015 (137 aa).

The region spanning 9–57 is the TM2 domain; the sequence is QASLVVAYLLLIFLGFFGVHRFYVGRTISGVVYLLTGGIFGIGYIVDFF. A run of 2 helical transmembrane segments spans residues 12–32 and 39–59; these read LVVA…RFYV and VVYL…FFLL. The interval 106–137 is disordered; it reads IQPQQQQYYQQPYQQQQYQPQPYQPNSPQYQP.

It belongs to the TM2 family.

The protein localises to the membrane. The protein is TM2 domain-containing protein DDB_G0287015 of Dictyostelium discoideum (Social amoeba).